We begin with the raw amino-acid sequence, 393 residues long: Myb-related transcription factor, partner of profilin (393 aa).

The segment covering 1-11 (MASATAAAAPG) has biased composition (low complexity). The interval 1 to 21 (MASATAAAAPGEAEETTRLRK) is disordered. The region spanning 16–88 (TTRLRKPRFS…EVQKRWNDFK (73 aa)) is the Myb-like domain. Residues 87–90 (FKRR) carry the Nuclear localization signal motif. Disordered regions lie at residues 125–254 (GPGV…EQSL), 290–323 (PLLP…APKV), and 348–393 (IISP…WKSP). A compositionally biased stretch (low complexity) spans 142–157 (AAASSQPQASTASTQR). Residues 160–171 (LSEDRRQDRRAD) show a composition bias toward basic and acidic residues. Polar residues predominate over residues 173–184 (PAQSKGGSSSPE). Pro residues-rich tracts occupy residues 219–229 (PPLPAPPPPPT), 238–247 (SPSPTPPRPT), 296–320 (PADP…PPSA), and 359–368 (KPLPPAPPLP). The segment covering 375-393 (HKRRKGFPTRKRRGRWKSP) has biased composition (basic residues). 2 consecutive short sequence motifs (nuclear localization signal) follow at residues 376–379 (KRRK) and 384–387 (RKRR).

As to quaternary structure, interacts with PFN1. Homodimer and heterodimer with PFN1. In terms of tissue distribution, ubiquitous. Highly expressed in brain, liver and testis. Moderate expression in heart, lung and skeletal muscle. Low expression in spleen and kidney.

The protein localises to the nucleus. Its function is as follows. Transcriptional repressor; DNA-binding protein that specifically recognizes the core sequence 5'-YAAC[GT]G-3'. Dimerization with PFN1 reduces its DNA-binding capacity. The sequence is that of Myb-related transcription factor, partner of profilin (Mypop) from Mus musculus (Mouse).